Reading from the N-terminus, the 81-residue chain is WAP four-disulfide core domain protein 13 (81 aa).

An N-terminal signal peptide occupies residues Met1 to Gly22. The region spanning Tyr31–Gln74 is the WAP domain. Intrachain disulfides connect Cys38/Cys62, Cys45/Cys66, Cys49/Cys61, and Cys55/Cys70.

It localises to the secreted. In terms of biological role, putative acid-stable proteinase inhibitor. The sequence is that of WAP four-disulfide core domain protein 13 (Wfdc13) from Mus musculus (Mouse).